The sequence spans 126 residues: MHLSLLKTKIHRATVTHSELNYEGSIAIDDNLLAATGIREFEQVHIWDVTNGARFSTYAIRAEAGSGVVSLNGGAARHVQVGDIIIIAAFASMTEQEADSFKPKLVYVDGNNQISHTNDTIPTQAA.

The active-site Schiff-base intermediate with substrate; via pyruvic acid is Ser-25. Position 25 is a pyruvic acid (Ser) (Ser-25). Substrate is bound at residue Thr-57. The Proton donor role is filled by Tyr-58. Gly-73 to Ala-75 lines the substrate pocket.

Belongs to the PanD family. In terms of assembly, heterooctamer of four alpha and four beta subunits. Requires pyruvate as cofactor. Post-translationally, is synthesized initially as an inactive proenzyme, which is activated by self-cleavage at a specific serine bond to produce a beta-subunit with a hydroxyl group at its C-terminus and an alpha-subunit with a pyruvoyl group at its N-terminus.

It localises to the cytoplasm. The catalysed reaction is L-aspartate + H(+) = beta-alanine + CO2. Its pathway is cofactor biosynthesis; (R)-pantothenate biosynthesis; beta-alanine from L-aspartate: step 1/1. Functionally, catalyzes the pyruvoyl-dependent decarboxylation of aspartate to produce beta-alanine. This is Aspartate 1-decarboxylase from Stenotrophomonas maltophilia (strain R551-3).